The sequence spans 597 residues: Gamma-terpinene synthase, chloroplastic (597 aa).

The transit peptide at Met-1–Ser-47 directs the protein to the chloroplast. 2 residues coordinate Mn(2+): Asp-350 and Asp-354. The DDXXD motif signature appears at Asp-350 to Asp-354. 2 homodimerization regions span residues Tyr-356–Leu-362 and Glu-428–Leu-464. 2 residues coordinate Mn(2+): Asp-494 and Glu-502.

This sequence belongs to the terpene synthase family. As to quaternary structure, homodimer. It depends on Mn(2+) as a cofactor. Requires Mg(2+) as cofactor.

Its subcellular location is the plastid. It localises to the chloroplast. The enzyme catalyses (2E)-geranyl diphosphate = gamma-terpinene + diphosphate. It functions in the pathway secondary metabolite biosynthesis; terpenoid biosynthesis. In terms of biological role, involved in the biosynthesis of phenolic monoterpenes natural products thymol and carvacrol which have a broad range of biological activities acting as antimicrobial compounds, insecticides, antioxidants and pharmaceutical agents. Monoterpene synthase which catalyzes the conversion of geranyl diphosphate (GPP) to gamma-terpinene. The polypeptide is Gamma-terpinene synthase, chloroplastic (Thymus caespititius (Cretan thyme)).